We begin with the raw amino-acid sequence, 177 residues long: Superoxide dismutase [Cu-Zn] 1 (177 aa).

The signal sequence occupies residues 1-20 (MKYTILSLVAGALISCSAMA). The Cu cation site is built by His-69, His-71, and His-94. A disulfide bond links Cys-76 and Cys-172. Zn(2+)-binding residues include His-94, His-103, His-112, and Asp-115. Position 150 (His-150) interacts with Cu cation.

Belongs to the Cu-Zn superoxide dismutase family. In terms of assembly, monomer. Cu cation is required as a cofactor. The cofactor is Zn(2+).

It is found in the periplasm. The catalysed reaction is 2 superoxide + 2 H(+) = H2O2 + O2. Its function is as follows. Destroys radicals which are normally produced within the cells and which are toxic to biological systems. This chain is Superoxide dismutase [Cu-Zn] 1 (sodC1), found in Salmonella typhimurium (strain 4/74).